Reading from the N-terminus, the 118-residue chain is Large ribosomal subunit protein uL18 (118 aa).

The disordered stretch occupies residues 1–24 (MISKPDKNKTRQRRHARVRGKISG). Basic residues predominate over residues 10–20 (TRQRRHARVRG).

It belongs to the universal ribosomal protein uL18 family. Part of the 50S ribosomal subunit; part of the 5S rRNA/L5/L18/L25 subcomplex. Contacts the 5S and 23S rRNAs.

Its function is as follows. This is one of the proteins that bind and probably mediate the attachment of the 5S RNA into the large ribosomal subunit, where it forms part of the central protuberance. The chain is Large ribosomal subunit protein uL18 from Lactiplantibacillus plantarum (strain ATCC BAA-793 / NCIMB 8826 / WCFS1) (Lactobacillus plantarum).